Consider the following 298-residue polypeptide: MDKKSSHPAGAARDILIELRNAGVYRDGRWLVRNVDLSVERGEIVTLIGPNGAGKSTAAKMALHILKPDEGMVSHKPGLRIGYVPQKINIDRTLPLSVERLMTLTGPLPRKEIDAALEAVGIAHLAKAETAHLSGGEFQRALMARALARKPDIMVLDEPVQGVDFSGEAALYELIARLRDDTGCGVLLISHDLHLVMAATDRVICLNGHVCCSGTPRDVTSSPEYVRLFGSRAVGPLAVYEHHHDHTHLPDGRVLYADGTTADPIAGSTMGPRGHCHVEDGHHHDHEHHHHEGGQPRA.

One can recognise an ABC transporter domain in the interval 17-232 (IELRNAGVYR…PEYVRLFGSR (216 aa)). 49-56 (GPNGAGKS) is a binding site for ATP. The disordered stretch occupies residues 273–298 (RGHCHVEDGHHHDHEHHHHEGGQPRA). Residues 276–298 (CHVEDGHHHDHEHHHHEGGQPRA) show a composition bias toward basic and acidic residues.

The protein belongs to the ABC transporter superfamily. Zinc importer (TC 3.A.1.15.5) family. The complex is composed of two ATP-binding proteins (ZnuC), two transmembrane proteins (ZnuB) and a solute-binding protein (ZnuA).

The protein localises to the cell inner membrane. The catalysed reaction is Zn(2+)(out) + ATP(in) + H2O(in) = Zn(2+)(in) + ADP(in) + phosphate(in) + H(+)(in). Part of the ABC transporter complex ZnuABC involved in zinc import. Responsible for energy coupling to the transport system. In Brucella abortus (strain 2308), this protein is Zinc import ATP-binding protein ZnuC.